The chain runs to 224 residues: Claudin-19 (224 aa).

The Cytoplasmic segment spans residues 1-7 (MANSGLQ). A helical transmembrane segment spans residues 8-28 (LLGYFLALGGWVGIIASTALP). Topologically, residues 29 to 81 (QWKQSSYAGDAIITAVGLYEGLWMSCASQSTGQVQCKLYDSLLALDGHIQSAR) are extracellular. Cysteine 54 and cysteine 64 are oxidised to a cystine. The helical transmembrane segment at 82–102 (ALMVVAVLLGFVAMVLSVVGM) threads the bilayer. At 103–117 (KCTRVGDSNPTAKSR) the chain is on the cytoplasmic side. Residues 118 to 138 (VAISGGALFLLAGLCTLTAVS) traverse the membrane as a helical segment. Residues 139–160 (WYATLVTQEFFNPSTPVNARYE) lie on the Extracellular side of the membrane. Residues 161-181 (FGPALFVGWASAGLAMLGGSF) traverse the membrane as a helical segment. Topologically, residues 182-224 (LCCTCPEPERANSIPQPYRSGPSTAAREPVVKLPASVKGPLGV) are cytoplasmic.

It belongs to the claudin family. Can form homo- and heteropolymeric tight junction strands. Interacts with other claudins including CLDN3, CLDN10, CLDN16 and CLDN18 with highest affinity for CLDN16. Interacts (via PDZ-binding motif TRV) with TJP1 (via PDZ domain). As to quaternary structure, (Microbial infection) Interacts (via both extracellular domains) with Clostridium perfringens enterotoxin CPE; the interaction disrupts claudin assembly in tight junctions. Expressed in the corticomedullary axis of the TAL, specifically in the cortex and the outer stripe of outer medulla (OSOM) zone (at protein level). Expressed in peripheral nervous system, in Schwan cells (at protein level).

It is found in the cell junction. The protein localises to the tight junction. It localises to the cell membrane. It catalyses the reaction Mg(2+)(in) = Mg(2+)(out). The enzyme catalyses Ca(2+)(in) = Ca(2+)(out). The catalysed reaction is Na(+)(in) = Na(+)(out). It carries out the reaction K(+)(in) = K(+)(out). It catalyses the reaction Rb(+)(in) = Rb(+)(out). The enzyme catalyses Cs(+)(in) = Cs(+)(out). The catalysed reaction is Li(+)(in) = Li(+)(out). In terms of biological role, forms paracellular channels: coassembles with CLDN16 into tight junction strands with cation-selective channels through the strands, conveying epithelial permeability in a process known as paracellular tight junction permeability. Involved in the maintenance of ion gradients along the nephron. In the thick ascending limb (TAL) of Henle's loop, facilitates sodium paracellular permeability from the interstitial compartment to the lumen, contributing to the lumen-positive transepithelial potential that drives paracellular magnesium and calcium reabsorption. Forms paracellular barriers on its own. In the peripheral nervous system, represents a major constituent of the tight junctions in Schwann cells and contributes to electrical sealing. During retinal neurogenesis, may regulate the barrier properties of tight junctions in retinal pigment epithelium, required for proper retinal tissue differentiation and vision. This chain is Claudin-19, found in Mus musculus (Mouse).